A 409-amino-acid chain; its full sequence is Protein a6 (409 aa).

Serine 86 bears the Phosphoserine mark. The span at arginine 106–alanine 120 shows a compositional bias: basic residues. Positions arginine 106–threonine 165 are disordered. A Phosphothreonine modification is found at threonine 133. At serine 134 the chain carries Phosphoserine. Polar residues predominate over residues glutamate 142–methionine 155.

The sequence is that of Protein a6 (a6) from Drosophila melanogaster (Fruit fly).